The chain runs to 449 residues: Adenylosuccinate synthetase isozyme 1 B (449 aa).

Residues 34–40 (GDEGKGK) and 62–64 (GHT) each bind GTP. Asp-35 serves as the catalytic Proton acceptor. Mg(2+) contacts are provided by Asp-35 and Gly-62. Asp-35 contacts substrate. Residues 35-38 (DEGK), 60-63 (NAGH), Thr-155, Arg-169, Asn-248, Thr-263, and Arg-327 contribute to the IMP site. Residue His-63 is the Proton donor of the active site. 323–329 (VTTGRKR) serves as a coordination point for substrate. Residues Arg-329, 355–357 (KLD), and 437–440 (GVGK) each bind GTP.

It belongs to the adenylosuccinate synthetase family. As to quaternary structure, homodimer. Mg(2+) serves as cofactor.

It is found in the cytoplasm. The enzyme catalyses IMP + L-aspartate + GTP = N(6)-(1,2-dicarboxyethyl)-AMP + GDP + phosphate + 2 H(+). Its pathway is purine metabolism; AMP biosynthesis via de novo pathway; AMP from IMP: step 1/2. Functionally, component of the purine nucleotide cycle (PNC), which interconverts IMP and AMP to regulate the nucleotide levels in various tissues, and which contributes to glycolysis and ammoniagenesis. Catalyzes the first committed step in the biosynthesis of AMP from IMP. The chain is Adenylosuccinate synthetase isozyme 1 B (adss1b) from Salmo salar (Atlantic salmon).